The primary structure comprises 1860 residues: MGAGSARGARGTAAAAAARGGGFLFSWILVSFACHLASTQGAPEDVDILQRLGLSWTKAGSPAPPGVIPFQSGFIFTQRARLQAPTGTVIPAALGTELALVLSLCSHRVNHAFLFAVRSQKRKLQLGLQFLPGKTVVHLGSRRSVAFDLDMHDGRWHHLALELRGRTVTLVTACGQRRVPVLLPFHRDPALDPGGSFLFGKMNPHAVQFEGALCQFSIYPVTQVAHNYCTHLRKQCGQADTYQSPLGPLFSQDSGRPFTFQSDLALLGLENLTTATPALGSLPAGRGPRGTVAPATPTKPQRTSPTNPHQHMAVGGPAQTPLLPAKLSASNALDPMLPASVGGSTRTPRPAAAQPSQKITATKIPKSLPTKPSAPSTSIVPIKSPHPTQKTAPSSFTKSALPTQKQVPPTSRPVPARVSRPAEKPIQRNPGMPRPPPPSTRPLPPTTSSSKKPIPTLARTEAKITSHASKPASARTSTHKPPPFTALSSSPAPTPGSTRSTRPPATMVPPTSGTSTPRTAPAVPTPGSAPTGSKKPIGSEASKKAGPKSSPRKPVPLRPGKAARDVPLSDLTTRPSPRQPQPSQQTTPALVLAPAQFLSSSPRPTSSGYSIFHLAGSTPFPLLMGPPGPKGDCGLPGPPGLPGLPGIPGARGPRGPPGPYGNPGLPGPPGAKGQKGDPGLSPGKAHDGAKGDMGLPGLSGNPGPPGRKGHKGYPGPAGHPGEQGQPGPEGSPGAKGYPGRQGLPGPVGDPGPKGSRGYIGLPGLFGLPGSDGERGLPGVPGKRGKMGMPGFPGVFGERGPPGLDGNPGELGLPGPPGVPGLIGDLGVLGPIGYPGPKGMKGLMGSVGEPGLKGDKGEQGVPGVSGDPGFQGDKGSQGLPGFPGARGKPGPLGKVGDKGSIGFPGPPGPEGFPGDIGPPGDNGPEGMKGKPGARGLPGPRGQLGPEGDEGPMGPPGAPGLEGQPGRKGFPGRPGLDGVKGEPGDPGRPGPVGEQGFMGFIGLVGEPGIVGEKGDRGMMGPPGVPGPKGSMGHPGMPGGMGTPGEPGPQGPPGSRGPPGMRGAKGRRGPRGPDGPAGEQGSRGLKGPPGPQGRPGRPGQQGVAGERGHLGSRGFPGIPGPSGPPGTKGLPGEPGPQGPQGPIGPPGEMGPKGPPGAVGEPGLPGEAGMKGDLGPLGTPGEQGLIGQRGEPGLEGDSGPMGPDGLKGDRGDPGPDGEHGEKGQEGLMGEDGPPGPPGVTGVRGPEGKSGKQGEKGRTGAKGAKGYQGQLGEMGVPGDPGPPGTPGPKGSRGSLGPTGAPGRMGAQGEPGLAGYDGHKGIVGPLGPPGPKGEKGEQGEDGKAEGPPGPPGDRGPVGDRGDRGEPGDPGYPGQEGVQGLRGKPGQQGQPGHPGPRGWPGPKGSKGAEGPKGKQGKAGAPGRRGVQGLQGLPGPRGVVGRQGLEGIAGPDGLPGRDGQAGQQGEQGDDGDPGPMGPAGKRGNPGVAGLPGAQGPPGFKGESGLPGQLGPPGKRGTEGRTGLPGNQGEPGSKGQPGDSGEMGFPGMAGLFGPKGPPGDIGFKGIQGPRGPPGLMGKEGIVGPLGILGPSGLPGPKGDKGSRGDWGLQGPRGPPGPRGRPGPPGPPGGPIQLQQDDLGAAFQTWMDTSGALRPESYSYPDRLVLDQGGEIFKTLHYLSNLIQSIKTPLGTKENPARVCRDLMDCEQKMVDGTYWVDPNLGCSSDTIEVSCNFTHGGQTCLKPITASKVEFAISRVQMNFLHLLSSEVTQHITIHCLNMTVWQEGTGQTPAKQAVRFRAWNGQIFEAGGQFRPEVSMDGCKVQDGRWHQTLFTFRTQDPQQLPIISVDNLPPASSGKQYRLEVGPACFL.

A signal peptide spans 1–41; it reads MGAGSARGARGTAAAAAARGGGFLFSWILVSFACHLASTQG. A propeptide spans 42–624 (N-terminal propeptide); the sequence is APEDVDILQR…AGSTPFPLLM (583 aa). Residues 71–236 enclose the Laminin G-like domain; it reads QSGFIFTQRA…NYCTHLRKQC (166 aa). N-linked (GlcNAc...) asparagine glycosylation is present at asparagine 271. Disordered regions lie at residues 278 to 608, 625 to 772, and 851 to 1625; these read ALGS…TSSG, GPPG…GSDG, and LKGD…IQLQ. Polar residues-rich tracts occupy residues 298–309 and 386–409; these read TKPQRTSPTNPH and HPTQ…QVPP. The segment covering 432–445 has biased composition (pro residues); sequence MPRPPPPSTRPLPP. 2 stretches are compositionally biased toward low complexity: residues 446–457 and 485–505; these read TTSSSKKPIPTL and TALS…RPPA. Polar residues predominate over residues 509-518; the sequence is PPTSGTSTPR. 2 stretches are compositionally biased toward low complexity: residues 572–588 and 599–608; these read TTRP…QTTP and SSSPRPTSSG. 16 Collagen-like domains span residues 625–679, 688–747, 748–807, 808–867, 871–930, 931–990, 1003–1062, 1066–1125, 1126–1185, 1192–1251, 1258–1317, 1318–1378, 1382–1441, 1442–1501, 1502–1561, and 1562–1621; these read GPPG…GDPG, GAKG…PGPV, GDPG…DGNP, GELG…SGDP, GDKG…KGKP, GARG…PGPV, GEPG…RGAK, GPRG…PGTK, GLPG…IGQR, GDSG…QGEK, GAKG…KGIV, GPLG…RGKP, GQPG…EGIA, GPDG…PGQL, GPPG…QGPR, and GPPG…PGGP. The interval 625-1618 is triple-helical region; it reads GPPGPKGDCG…RGRPGPPGPP (994 aa). Residues 654 to 669 show a composition bias toward pro residues; the sequence is RGPPGPYGNPGLPGPP. Positions 714-734 are enriched in low complexity; it reads PGPAGHPGEQGQPGPEGSPGA. 2 stretches are compositionally biased toward low complexity: residues 911–924 and 932–944; these read FPGD…NGPE and ARGL…QLGP. The span at 1033-1042 shows a compositional bias: gly residues; that stretch reads GMPGGMGTPG. The segment covering 1043–1053 has biased composition (pro residues); sequence EPGPQGPPGSR. Residues 1130–1142 are compositionally biased toward pro residues; sequence EPGPQGPQGPIGP. Basic and acidic residues-rich tracts occupy residues 1202–1220 and 1241–1253; these read LKGD…EKGQ and PEGK…EKGR. 2 stretches are compositionally biased toward basic and acidic residues: residues 1326–1338 and 1350–1360; these read KGEK…DGKA and PVGDRGDRGEP. The segment covering 1449-1458 has biased composition (low complexity); the sequence is RDGQAGQQGE. A compositionally biased stretch (low complexity) spans 1572–1587; the sequence is IVGPLGILGPSGLPGP. Pro residues predominate over residues 1603 to 1620; it reads RGPPGPRGRPGPPGPPGG. A propeptide spans 1622-1860 (C-terminal propeptide); sequence IQLQQDDLGA…RLEVGPACFL (239 aa). The region spanning 1660–1860 is the Fibrillar collagen NC1 domain; sequence GEIFKTLHYL…RLEVGPACFL (201 aa). Disulfide bonds link cysteine 1690-cysteine 1722, cysteine 1731-cysteine 1858, and cysteine 1767-cysteine 1811. 4 residues coordinate Ca(2+): aspartate 1708, asparagine 1710, cysteine 1713, and aspartate 1716. Asparagine 1769 carries an N-linked (GlcNAc...) asparagine glycan.

This sequence belongs to the fibrillar collagen family.

The protein resides in the secreted. The protein localises to the extracellular space. It is found in the extracellular matrix. In terms of biological role, plays a role during the calcification of cartilage and the transition of cartilage to bone. The sequence is that of Collagen alpha-1(XXVII) chain (COL27A1) from Homo sapiens (Human).